Consider the following 254-residue polypeptide: 5'-nucleotidase SurE (254 aa).

4 residues coordinate a divalent metal cation: aspartate 8, aspartate 9, serine 38, and asparagine 91.

This sequence belongs to the SurE nucleotidase family. A divalent metal cation is required as a cofactor.

Its subcellular location is the cytoplasm. The catalysed reaction is a ribonucleoside 5'-phosphate + H2O = a ribonucleoside + phosphate. Functionally, nucleotidase that shows phosphatase activity on nucleoside 5'-monophosphates. This Anaeromyxobacter dehalogenans (strain 2CP-C) protein is 5'-nucleotidase SurE.